We begin with the raw amino-acid sequence, 733 residues long: Leucine-rich repeat neuronal protein 4 (733 aa).

An N-terminal signal peptide occupies residues 1 to 19; the sequence is MRWTLMLQLLQLLLQLLMA. Residues 20-676 lie on the Extracellular side of the membrane; the sequence is QSQSLERISQ…CATFTTKPSS (657 aa). LRR repeat units follow at residues 62-82, 83-106, 107-128, 130-151, 154-175, 178-199, 207-230, 231-253, 256-278, and 281-302; these read GVTT…CLPR, TLRS…GRLP, ELRV…RDTL, ELRE…AGPS, SLRS…TFAC, ALRL…AFAG, ALEL…RNLP, KLKS…IFKM, NLRQ…IFQD, and NLQV…NSSQ. Asn70 carries an N-linked (GlcNAc...) asparagine glycan. The N-linked (GlcNAc...) asparagine glycan is linked to Asn183. 5 N-linked (GlcNAc...) asparagine glycosylation sites follow: Asn291, Asn299, Asn327, Asn408, and Asn469. An LRRCT domain is found at 311 to 364; that stretch reads NPLICSCELAWLLVDVNKTVLHRAADTMCEPALGSTGPFSGPLSLSHLSNVCRS. Residues 395 to 423 form a disordered region; it reads STALSAQPGGSQQNITKVPSLTMTSPTQG. The tract at residues 480–518 is disordered; it reads KYLEPLPTSPNPRSLPQTKQRTQATPRALHTDPPQDEIP. Over residues 490 to 504 the composition is skewed to polar residues; sequence NPRSLPQTKQRTQAT. Residues 576 to 675 enclose the Fibronectin type-III domain; sequence TPDPPTLQGV…SCATFTTKPS (100 aa). Residue Asn619 is glycosylated (N-linked (GlcNAc...) asparagine). The chain crosses the membrane as a helical span at residues 677-697; it reads VVIFWGLCTASGLLLVSTLVL. Over 698–733 the chain is Cytoplasmic; sequence SVCLWRQRWKPHRQFYDTHLVAFKNPARAEEVTQWE.

Its subcellular location is the membrane. Its function is as follows. May play an important role in hippocampus-dependent long-lasting memory. This Mus musculus (Mouse) protein is Leucine-rich repeat neuronal protein 4 (Lrrn4).